The chain runs to 237 residues: Carbonyl reductase family member 4 (237 aa).

NADP(+)-binding positions include 11-14 (SRGI), 34-35 (RN), Asp57, and 84-86 (AAG). Substrate is bound at residue Ser135. Residues Tyr148, Lys152, and 181-183 (IHT) contribute to the NADP(+) site. Residue Tyr148 is the Proton acceptor of the active site.

Belongs to the short-chain dehydrogenases/reductases (SDR) family. As to quaternary structure, homotetramer (in vitro). Heterotetramer with HSD17B8; contains two molecules each of HSD17B8 and CBR4.

It is found in the mitochondrion matrix. It functions in the pathway lipid metabolism; fatty acid biosynthesis. In terms of biological role, the heterotetramer with HSD17B8 has NADH-dependent 3-ketoacyl-acyl carrier protein reductase activity, and thereby plays a role in mitochondrial fatty acid biosynthesis. Within the heterotetramer, HSD17B8 binds NADH; CBR4 binds NADPD. The homotetramer has NADPH-dependent quinone reductase activity. Both homotetramer and the heterotetramer have broad in vitro substrate specificity and can reduce 9,10-phenanthrenequinone, 1,4-benzoquinone and various other o-quinones and p-quinones. In Danio rerio (Zebrafish), this protein is Carbonyl reductase family member 4 (cbr4).